Here is a 297-residue protein sequence, read N- to C-terminus: N-acetylneuraminate lyase (297 aa).

Positions 47 and 48 each coordinate aceneuramate. Catalysis depends on Tyr-137, which acts as the Proton donor. Lys-165 serves as the catalytic Schiff-base intermediate with substrate. Aceneuramate-binding residues include Thr-167, Gly-189, Asp-191, Glu-192, and Ser-208.

This sequence belongs to the DapA family. NanA subfamily. Homotetramer.

The protein localises to the cytoplasm. It catalyses the reaction aceneuramate = aldehydo-N-acetyl-D-mannosamine + pyruvate. The protein operates within amino-sugar metabolism; N-acetylneuraminate degradation; D-fructose 6-phosphate from N-acetylneuraminate: step 1/5. Its function is as follows. Catalyzes the reversible aldol cleavage of N-acetylneuraminic acid (sialic acid; Neu5Ac) to form pyruvate and N-acetylmannosamine (ManNAc) via a Schiff base intermediate. In Escherichia coli O139:H28 (strain E24377A / ETEC), this protein is N-acetylneuraminate lyase.